A 196-amino-acid chain; its full sequence is Large ribosomal subunit protein eL15 (196 aa).

Residues 162–196 (RGLTNAGRSNRGLQNRGKGAEHTRPSAGSGSRRGK) form a disordered region.

Belongs to the eukaryotic ribosomal protein eL15 family.

In Haloquadratum walsbyi (strain DSM 16790 / HBSQ001), this protein is Large ribosomal subunit protein eL15.